We begin with the raw amino-acid sequence, 195 residues long: Ras-related protein Rab-31 (195 aa).

Residues G16, G18, K19, S20, S21, D32, and H33 each contribute to the GTP site. S20 serves as a coordination point for Mg(2+). Short sequence motifs (switch) lie at residues H30–S42 and A63–S79. S36 carries the post-translational modification Phosphoserine. GTP-binding residues include T38, G64, N119, D122, A150, and K151. T38 serves as a coordination point for Mg(2+). S-geranylgeranyl cysteine attachment occurs at residues C194 and C195.

It belongs to the small GTPase superfamily. Rab family. Interacts (in GDP-bound form) with RIN3 and GAPVD1, which function as guanine exchange factors (GEF). Interacts (in GTP-bound form) with EEA1. Interacts with NGFR. Interacts with EGFR. Interacts with OCRL. Interacts (in GTP-bound form) with APPL2; interaction contributes to or enhances recruitment of APPL2 to the phagosomes; interaction enhances Fc-gamma receptor-mediated phagocytosis through PI3K/Akt signaling in macrophages. It depends on Mg(2+) as a cofactor. Detected in brain astrocytes, spleen and intestine (at protein level).

The protein localises to the early endosome. The protein resides in the golgi apparatus. It localises to the trans-Golgi network. Its subcellular location is the trans-Golgi network membrane. It is found in the cytoplasmic vesicle. The protein localises to the phagosome. The protein resides in the phagosome membrane. The enzyme catalyses GTP + H2O = GDP + phosphate + H(+). With respect to regulation, regulated by guanine nucleotide exchange factors (GEFs) including RIN3 and GAPVD1 which promote the exchange of bound GDP for free GTP. Regulated by GTPase activating proteins (GAPs) which increase the GTP hydrolysis activity. Inhibited by GDP dissociation inhibitors (GDIs) which prevent Rab-GDP dissociation. The small GTPases Rab are key regulators of intracellular membrane trafficking, from the formation of transport vesicles to their fusion with membranes. Rabs cycle between an inactive GDP-bound form and an active GTP-bound form that is able to recruit to membranes different set of downstream effectors directly responsible for vesicle formation, movement, tethering and fusion. Required for the integrity and for normal function of the Golgi apparatus and the trans-Golgi network. Plays a role in insulin-stimulated translocation of GLUT4 to the cell membrane. Plays a role in the maturation of phagosomes that engulf pathogens, such as S.aureus and Mycobacterium. Plays a role in M6PR transport from the trans-Golgi network to endosomes. Plays a role in the internalization of EGFR from the cell membrane into endosomes. This Rattus norvegicus (Rat) protein is Ras-related protein Rab-31.